A 182-amino-acid polypeptide reads, in one-letter code: Troponin I, fast skeletal muscle (182 aa).

G2 carries the post-translational modification N-acetylglycine. The segment at G2–H48 is involved in binding TNC. T12 bears the Phosphothreonine mark. Residues E29 to K41 show a composition bias toward basic and acidic residues. Positions E29–H53 are disordered. An involved in binding TNC and actin region spans residues N97–M117. S118 is modified (phosphoserine).

It belongs to the troponin I family. Binds to actin and tropomyosin.

Troponin I is the inhibitory subunit of troponin, the thin filament regulatory complex which confers calcium-sensitivity to striated muscle actomyosin ATPase activity. The chain is Troponin I, fast skeletal muscle (Tnni2) from Rattus norvegicus (Rat).